Here is a 723-residue protein sequence, read N- to C-terminus: tRNA (guanine(27)-N(2))-dimethyltransferase (723 aa).

Over residues 1-10 (MENMAEEELL) the composition is skewed to acidic residues. The interval 1-72 (MENMAEEELL…SLASVPEEAE (72 aa)) is disordered. Threonine 23 is modified (phosphothreonine). The segment covering 32–44 (PAADTALDSAPTP) has biased composition (low complexity). The segment covering 45–59 (DSAPAPALAPAPAPA) has biased composition (pro residues). Residue serine 61 is modified to Phosphoserine. The Nucleolar localization signal motif lies at 128 to 132 (HKLRR). The C2H2-type zinc-finger motif lies at 177–199 (YHCIICSATITRRTDMLGHVKRH). One can recognise a Trm1 methyltransferase domain in the interval 220-679 (EVLKETDTDI…ASLTQFKSIL (460 aa)). The S-adenosyl-L-methionine site is built by arginine 253, aspartate 300, aspartate 348, and alanine 349. Residues cysteine 479, cysteine 482, cysteine 504, and cysteine 506 each contribute to the Zn(2+) site. Lysine 576 is covalently cross-linked (Glycyl lysine isopeptide (Lys-Gly) (interchain with G-Cter in SUMO2)). Serine 603 carries the post-translational modification Phosphoserine.

This sequence belongs to the class I-like SAM-binding methyltransferase superfamily. Trm1 family.

Its subcellular location is the nucleus. It localises to the nucleolus. It carries out the reaction guanosine(27) in tRNA(Tyr) + 2 S-adenosyl-L-methionine = N(2)-dimethylguanosine(27) in tRNA(Tyr) + 2 S-adenosyl-L-homocysteine + 2 H(+). Functionally, specifically dimethylates a single guanine residue at position 27 of tRNA(Tyr) using S-adenosyl-L-methionine as donor of the methyl groups. Dimethylation at position 27 of tRNA(Tyr) is required for efficient translation of tyrosine codons. Also required to maintain 3-(3-amino-3-carboxypropyl)uridine (acp3U) in the D-loop of several cytoplasmic tRNAs. The polypeptide is tRNA (guanine(27)-N(2))-dimethyltransferase (Rattus norvegicus (Rat)).